We begin with the raw amino-acid sequence, 79 residues long: MEKLTILLLVAVVLMSTQALPQGGGEKRPRENIRFLSKRKSNAERWREGSCTSWLATCTDASQCCTGVCYKRAYCALWE.

The N-terminal stretch at 1-19 (MEKLTILLLVAVVLMSTQA) is a signal peptide. A propeptide spanning residues 20–47 (LPQGGGEKRPRENIRFLSKRKSNAERWR) is cleaved from the precursor. 3 disulfides stabilise this stretch: cysteine 51–cysteine 65, cysteine 58–cysteine 69, and cysteine 64–cysteine 75.

It belongs to the conotoxin O2 superfamily. As to expression, expressed by the venom duct.

It localises to the secreted. The protein is Conotoxin TxMEKL-021 of Conus textile (Cloth-of-gold cone).